The primary structure comprises 444 residues: MDEEYEVIVLGTGLKECILSGLLSVDGVKVLHMDRNDYYGGESTSLNLNQLWKKFRGEEKAPEHLGASRDYNVDMMPKFMMGNGKLVRTLIHTDVTKYLSFKAVDGSYVFVKGKVQKVPATPMEALKSSLMGIFEKRRAGKFFSFVQEYDEKDPKTHDGMDLTRVTTKELIAKYGLDGNTIDFIGHAVALHTNDQHLDQPAFDTVMRMKLYAESLARFQGTSPYIYPLYGLGELPQAFARLSAVYGGTYMLNKPECKVEFDEGGKVIGVTSEGETAKCKKIVCDPSYLPNKVRKIGRVARAIAIMSHPIPNTNDSHSVQVIIPQKQLARKSDMYVFCCSYSHNVAPKGKFIAFVSTDAETDNPQTELKPGTDLLGPVDEIFFDMYDRYEPVNEPELDNCFISTSYDATTHFETTVADVLNMYTLITGKQLDLSVDLSAASAAEE.

It belongs to the Rab GDI family. As to expression, expressed in roots and floral buds.

In terms of biological role, regulates the GDP/GTP exchange reaction of most RAB proteins by inhibiting the dissociation of GDP from them, and the subsequent binding of GTP. The polypeptide is Guanosine nucleotide diphosphate dissociation inhibitor 2 (GDI2) (Arabidopsis thaliana (Mouse-ear cress)).